The chain runs to 644 residues: Chaperone protein DnaK (644 aa).

At threonine 200 the chain carries Phosphothreonine; by autocatalysis. The segment at 603-644 (VMAAEQAKSGGAAPGAAPGGAQQAAPDADVVDADFKEVDDKK) is disordered. The span at 612 to 630 (GGAAPGAAPGGAQQAAPDA) shows a compositional bias: low complexity. Basic and acidic residues predominate over residues 635–644 (ADFKEVDDKK).

This sequence belongs to the heat shock protein 70 family.

Functionally, acts as a chaperone. This Polynucleobacter asymbioticus (strain DSM 18221 / CIP 109841 / QLW-P1DMWA-1) (Polynucleobacter necessarius subsp. asymbioticus) protein is Chaperone protein DnaK.